Here is a 147-residue protein sequence, read N- to C-terminus: Auxin-responsive protein SAUR41 (147 aa).

It belongs to the ARG7 family. As to expression, specifically expressed in the quiescent center and cortex or endodermis initials of root stem niches. Expressed in vascular tissues from hypocotyls, petioles and cotyledons.

The protein localises to the cytoplasm. Functionally, plays a role in the regulation of cell expansion, root meristem patterning and auxin transport. In Arabidopsis thaliana (Mouse-ear cress), this protein is Auxin-responsive protein SAUR41.